The primary structure comprises 269 residues: MTALPRYSVFGNPVAHSKSPQIHQQFALQEGVDIEYERICADIGGFAQAVSTFFETGGCGANVTVPFKQEAFHLADEHSERALAAGAVNTLIPLKNGKLRGDNTDGIGLTNDITQVKNIAIEGKTILLLGAGGAVRGVIPVLKEHRPARIVIANRTRAKAEELAQLFGIEAVPMADVNGGFDIIINGTSGGLNGQIPDIPPDIFQNCALAYDMVYGCAAKPFLDFARQSGAKKTADGLGMLVGQAAASYALWRGFTPDIRPVIEYMKAM.

Shikimate-binding positions include 17-19 and T64; that span reads SKS. K68 functions as the Proton acceptor in the catalytic mechanism. E80 provides a ligand contact to NADP(+). Shikimate-binding residues include N89 and D105. NADP(+)-binding positions include 130–134, 154–159, and M213; these read GAGGA and NRTRAK. Residue Y215 coordinates shikimate. Residue G237 participates in NADP(+) binding.

The protein belongs to the shikimate dehydrogenase family. Homodimer.

The enzyme catalyses shikimate + NADP(+) = 3-dehydroshikimate + NADPH + H(+). Its pathway is metabolic intermediate biosynthesis; chorismate biosynthesis; chorismate from D-erythrose 4-phosphate and phosphoenolpyruvate: step 4/7. Its function is as follows. Involved in the biosynthesis of the chorismate, which leads to the biosynthesis of aromatic amino acids. Catalyzes the reversible NADPH linked reduction of 3-dehydroshikimate (DHSA) to yield shikimate (SA). The sequence is that of Shikimate dehydrogenase (NADP(+)) from Neisseria meningitidis serogroup C / serotype 2a (strain ATCC 700532 / DSM 15464 / FAM18).